Reading from the N-terminus, the 1182-residue chain is Tyrosine-protein kinase ABL2 (1182 aa).

Disordered stretches follow at residues 1–47 (MGQQ…TGFN) and 60–80 (EDGF…HRPY). Gly-2 is lipidated: N-myristoyl glycine. The tract at residues 2–106 (GQQVGRVGEA…SKENLLGATE (105 aa)) is CAP. Positions 20 to 30 (RGIRGSSAARP) are enriched in low complexity. Ser-97 carries the phosphoserine modification. The SH3 domain occupies 107–167 (SDPNLFVALY…PSNYITPVNS (61 aa)). Phosphotyrosine is present on residues Tyr-116, Tyr-161, Tyr-174, Tyr-185, Tyr-218, and Tyr-231. The SH2 domain occupies 173 to 263 (WYHGPVSRSA…GLVTTLHYPA (91 aa)). Tyr-261 bears the Phosphotyrosine; by ABL1 and autocatalysis mark. At Tyr-272 the chain carries Phosphotyrosine; by autocatalysis. Residue Ser-275 is modified to Phosphoserine. In terms of domain architecture, Protein kinase spans 288 to 539 (ITMKHKLGGG…PSFAETHQAF (252 aa)). 294-302 (LGGGQYGEV) serves as a coordination point for ATP. Tyr-299 and Tyr-303 each carry phosphotyrosine. ATP contacts are provided by residues Lys-317 and 362–368 (EYMPYGN). Asp-409 functions as the Proton acceptor in the catalytic mechanism. Residues 427–451 (DFGLSRLMTGDTYTAHAGAKFPIKW) carry the Kinase activation loop motif. Tyr-439 carries the post-translational modification Phosphotyrosine; by autocatalysis and SRC-type Tyr-kinases. Residue Tyr-459 is modified to Phosphotyrosine. At Tyr-568 the chain carries Phosphotyrosine; by autocatalysis. Positions 611 to 641 (IRGAQASSGSPALPRKQRDKSPSSLLEDAKE) are disordered. 3 positions are modified to phosphoserine: Ser-620, Ser-631, and Ser-633. Asp-647 carries the post-translational modification Phosphotyrosine. Residues 654 to 674 (SSFMKKRNAPTPPKRSSSFRE) form a disordered region. Phosphoserine is present on Ser-655. Positions 658–660 (KKR) match the Nuclear localization signal motif. Residues Ala-662 and Arg-668 each carry the phosphotyrosine modification. 3 positions are modified to phosphoserine: Ser-669, Ser-670, and Ser-671. Residues Tyr-683 and Tyr-718 each carry the phosphotyrosine modification. The residue at position 683 (Tyr-683) is a Phosphotyrosine; by autocatalysis. Residues 694–930 (SLQHADGFSF…PVLPTTHNHK (237 aa)) are F-actin-binding. Residues 763-794 (LRAGKPTASDDTSKPFPRSNSTSSMSSGLPEQ) form a disordered region. The residue at position 776 (Lys-776) is an N6-acetyllysine. Over residues 780 to 791 (RSNSTSSMSSGL) the composition is skewed to polar residues. At Ser-783 the chain carries Phosphoserine. Phosphothreonine is present on Thr-800. Polar residues predominate over residues 807 to 823 (RSKLQLERTVSTSSQPE). A disordered region spans residues 807 to 851 (RSKLQLERTVSTSSQPEENVDRANDMLPKKSEESAAPSRERPKAK). Phosphoserine occurs at positions 817 and 820. Positions 825 to 849 (NVDRANDMLPKKSEESAAPSRERPK) are enriched in basic and acidic residues. A phosphoserine mark is found at Ser-915 and Ser-936. A disordered region spans residues 964–1024 (HQVTSSGDKD…TSETQEGGKK (61 aa)). The span at 1010–1019 (TAGQSTSETQ) shows a compositional bias: polar residues. The F-actin-binding stretch occupies residues 1020–1182 (EGGKKAALGA…VQEISDVVQR (163 aa)).

It belongs to the protein kinase superfamily. Tyr protein kinase family. ABL subfamily. In terms of assembly, interacts with PSMA7. Interacts with CTTN. Found in a complex with ABL1, ABL2, CRK and UNC119; leading to the inhibition of CRK phosphorylation by ABL kinases. Mg(2+) is required as a cofactor. The cofactor is Mn(2+). Post-translationally, phosphorylated at Tyr-261 by ABL1 in response to oxidative stress. Phosphorylated by PDGFRB. In terms of processing, polyubiquitinated. Polyubiquitination of ABL2 leads to degradation. In terms of tissue distribution, widely expressed.

The protein localises to the cytoplasm. Its subcellular location is the cytoskeleton. It catalyses the reaction L-tyrosyl-[protein] + ATP = O-phospho-L-tyrosyl-[protein] + ADP + H(+). Its activity is regulated as follows. Stabilized in the inactive form by an association between the SH3 domain and the SH2-TK linker region, interactions of the N-terminal cap, and contributions from an N-terminal myristoyl group and phospholipids. Activated by autophosphorylation as well as by SRC-family kinase-mediated phosphorylation. Activated by RIN1 binding to the SH2 and SH3 domains. Inhibited by imatinib mesylate (Gleevec) which is used for the treatment of chronic myeloid leukemia (CML). Phosphatidylinositol 4,5-bisphosphate (PIP2), a highly abundant phosphoinositide known to regulate cytoskeletal and membrane proteins, inhibits the tyrosine kinase activity. Non-receptor tyrosine-protein kinase that plays an ABL1-overlapping role in key processes linked to cell growth and survival such as cytoskeleton remodeling in response to extracellular stimuli, cell motility and adhesion and receptor endocytosis. Coordinates actin remodeling through tyrosine phosphorylation of proteins controlling cytoskeleton dynamics like MYH10 (involved in movement); CTTN (involved in signaling); or TUBA1 and TUBB (microtubule subunits). Binds directly F-actin and regulates actin cytoskeletal structure through its F-actin-bundling activity. Involved in the regulation of cell adhesion and motility through phosphorylation of key regulators of these processes such as CRK, CRKL, DOK1 or ARHGAP35. Adhesion-dependent phosphorylation of ARHGAP35 promotes its association with RASA1, resulting in recruitment of ARHGAP35 to the cell periphery where it inhibits RHO. Phosphorylates multiple receptor tyrosine kinases like PDGFRB and other substrates which are involved in endocytosis regulation such as RIN1. In brain, may regulate neurotransmission by phosphorylating proteins at the synapse. ABL2 also acts as a regulator of multiple pathological signaling cascades during infection. Pathogens can highjack ABL2 kinase signaling to reorganize the host actin cytoskeleton for multiple purposes, like facilitating intracellular movement and host cell exit. Finally, functions as its own regulator through autocatalytic activity as well as through phosphorylation of its inhibitor, ABI1. Positively regulates chemokine-mediated T-cell migration, polarization, and homing to lymph nodes and immune-challenged tissues, potentially via activation of NEDD9/HEF1 and RAP1. The polypeptide is Tyrosine-protein kinase ABL2 (ABL2) (Homo sapiens (Human)).